The following is a 186-amino-acid chain: Elongation factor P (186 aa).

The protein belongs to the elongation factor P family.

The protein localises to the cytoplasm. It functions in the pathway protein biosynthesis; polypeptide chain elongation. Involved in peptide bond synthesis. Stimulates efficient translation and peptide-bond synthesis on native or reconstituted 70S ribosomes in vitro. Probably functions indirectly by altering the affinity of the ribosome for aminoacyl-tRNA, thus increasing their reactivity as acceptors for peptidyl transferase. The chain is Elongation factor P from Prochlorococcus marinus (strain MIT 9515).